Here is a 161-residue protein sequence, read N- to C-terminus: Protein ZMO0507 (161 aa).

Belongs to the free Met sulfoxide reductase family.

This Zymomonas mobilis subsp. mobilis (strain ATCC 31821 / ZM4 / CP4) protein is Protein ZMO0507.